A 421-amino-acid polypeptide reads, in one-letter code: Serine hydroxymethyltransferase (421 aa).

(6S)-5,6,7,8-tetrahydrofolate is bound by residues Leu118 and Gly122 to Leu124. Lys226 is modified (N6-(pyridoxal phosphate)lysine). (6S)-5,6,7,8-tetrahydrofolate is bound at residue Glu242.

The protein belongs to the SHMT family. As to quaternary structure, homodimer. Requires pyridoxal 5'-phosphate as cofactor.

It localises to the cytoplasm. The enzyme catalyses (6R)-5,10-methylene-5,6,7,8-tetrahydrofolate + glycine + H2O = (6S)-5,6,7,8-tetrahydrofolate + L-serine. Its pathway is one-carbon metabolism; tetrahydrofolate interconversion. The protein operates within amino-acid biosynthesis; glycine biosynthesis; glycine from L-serine: step 1/1. In terms of biological role, catalyzes the reversible interconversion of serine and glycine with tetrahydrofolate (THF) serving as the one-carbon carrier. This reaction serves as the major source of one-carbon groups required for the biosynthesis of purines, thymidylate, methionine, and other important biomolecules. Also exhibits THF-independent aldolase activity toward beta-hydroxyamino acids, producing glycine and aldehydes, via a retro-aldol mechanism. The sequence is that of Serine hydroxymethyltransferase from Mycoplasmopsis synoviae (strain 53) (Mycoplasma synoviae).